Consider the following 339-residue polypeptide: WAT1-related protein At5g40210 (339 aa).

10 helical membrane-spanning segments follow: residues 11–31 (GWILTAMVVTEFSNVGVNTLV), 42–62 (FVVLVYSYTFGSLLLLPLTFF), 74–94 (FSILCNMGILGLIASAFQILG), 104–124 (TLSSAMSNVNPAFTFILAVVF), 140–160 (VLGTILSIIGALVVTLYHGPM), 168–188 (WIIGGGLLALQYILVSVSYLV), 200–220 (VVVTLVHNVCIAVVCAFVSLL), 233–253 (FDITLITVVATGILNSGYYVI), 266–286 (LSMFKPLSILIAAVSTFIFLG), and 289–309 (LYLGSVMGGILISIGFYMVLW). The region spanning 29-154 (TLVKAATSKG…LSIIGALVVT (126 aa)) is the EamA domain.

It belongs to the drug/metabolite transporter (DMT) superfamily. Plant drug/metabolite exporter (P-DME) (TC 2.A.7.4) family.

It localises to the membrane. This Arabidopsis thaliana (Mouse-ear cress) protein is WAT1-related protein At5g40210.